An 84-amino-acid chain; its full sequence is uncharacterized protein (84 aa).

The segment covering Met1–Asn14 has biased composition (low complexity). A disordered region spans residues Met1–Glu84. Residues Ser28–Phe40 are compositionally biased toward gly residues. Composition is skewed to basic and acidic residues over residues Asp53–Thr65 and Lys73–Glu84.

This is an uncharacterized protein from Schizosaccharomyces pombe (strain 972 / ATCC 24843) (Fission yeast).